The chain runs to 436 residues: Drebrin-like protein (436 aa).

Positions 2–133 constitute an ADF-H domain; sequence AVNLSRNGPA…EPECIMEKVA (132 aa). Position 26 is a phosphothreonine (T26). Position 160 is a phosphoserine (S160). K176 is modified (N6-acetyllysine). Residues 179 to 233 are a coiled coil; that stretch reads FWAKAEKEEENRRLEEKRRAEEERQRLEEERRERELQEAARREQRYQEQHRSAGA. 2 stretches are compositionally biased toward basic and acidic residues: residues 185–229 and 264–275; these read KEEE…EQHR and HPREIFKQKERA. The interval 185 to 341 is disordered; that stretch reads KEEENRRLEE…AQTEEEPTYE (157 aa). Polar residues predominate over residues 276-286; sequence MSTTSVTSSQP. Residues S277, S280, S283, and S291 each carry the phosphoserine modification. The span at 294–303 shows a compositional bias: polar residues; it reads LQKQLTQPET. K296 carries the post-translational modification N6-acetyllysine. T299 bears the Phosphothreonine mark. Y340 and Y350 each carry phosphotyrosine. Residues 377 to 436 form the SH3 domain; sequence GQGLCARALYDYQAADDTEISFDPENLITGIEVIDEGWWRGYGPDGHFGMFPANYVELIE.

Belongs to the ABP1 family. Interacts with SHANK3, SYN1 and PRAM1. Interacts with SHANK2. Interacts with FGD1, DNM1 and MAP4K1. Interacts with ANKRD54. Interacts with COBL. Interacts with WASL and WIPF1. As to expression, detected in hippocampus neurons and in the Purkinje cell layer in cerebellum (at protein level). Predominantly expressed in brain, thymus and spleen. Also found in testis, heart and lung. Little or no expression detected in ovary or muscle.

The protein resides in the cytoplasm. Its subcellular location is the cytoskeleton. It localises to the cell projection. It is found in the lamellipodium. The protein localises to the ruffle. The protein resides in the cell cortex. Its subcellular location is the cytosol. It localises to the synapse. It is found in the perikaryon. The protein localises to the neuron projection. The protein resides in the cell membrane. Its subcellular location is the cytoplasmic vesicle. It localises to the clathrin-coated vesicle membrane. It is found in the golgi apparatus membrane. The protein localises to the podosome. The protein resides in the early endosome. Its subcellular location is the dendrite. It localises to the postsynaptic density. Functionally, adapter protein that binds F-actin and DNM1, and thereby plays a role in receptor-mediated endocytosis. Plays a role in the reorganization of the actin cytoskeleton, formation of cell projections, such as neurites, in neuron morphogenesis and synapse formation via its interaction with WASL and COBL. Does not bind G-actin and promote actin polymerization by itself. Required for the formation of organized podosome rosettes. May act as a common effector of antigen receptor-signaling pathways in leukocytes. Acts as a key component of the immunological synapse that regulates T-cell activation by bridging TCRs and the actin cytoskeleton to gene activation and endocytic processes. The chain is Drebrin-like protein from Mus musculus (Mouse).